A 692-amino-acid polypeptide reads, in one-letter code: Phenoloxidase subunit 2 (692 aa).

A propeptide spanning residues 1 to 97 (MTDRVKSLQL…PRHQEMATEV (97 aa)) is cleaved from the precursor. Positions 213, 217, and 243 each coordinate Cu cation. Residues Asn256, Asn295, and Asn309 are each glycosylated (N-linked (GlcNAc...) asparagine). Glu351 (proton acceptor) is an active-site residue. Residues His366, His370, and His406 each contribute to the Cu cation site. N-linked (GlcNAc...) asparagine glycosylation is present at Asn494. Disulfide bonds link Cys583-Cys628 and Cys585-Cys635.

Belongs to the tyrosinase family. As to quaternary structure, heterodimer. The cofactor is Cu(2+).

The protein localises to the secreted. It catalyses the reaction L-tyrosine + O2 = L-dopaquinone + H2O. The catalysed reaction is 2 L-dopa + O2 = 2 L-dopaquinone + 2 H2O. Functionally, copper-containing oxidase that functions in the formation of pigments such as melanins and other polyphenolic compounds. Catalyzes the rate-limiting conversions of tyrosine to DOPA, DOPA to DOPA-quinone and possibly 5,6 dihydroxyindole to indole-5'6 quinone. Binds to the surface of hemocytes and is involved in hemocyte melanization. Binds the A.niger cell wall component alpha-1,3-glucan, a fungal pathogen-associated molecular pattern (PAMP) that activates the host immune response. The protein is Phenoloxidase subunit 2 of Galleria mellonella (Greater wax moth).